We begin with the raw amino-acid sequence, 183 residues long: Large ribosomal subunit protein bL32m (183 aa).

Residues 1–71 constitute a mitochondrion transit peptide; the sequence is MNSLIFGKQL…DFFSNNGILL (71 aa). Zn(2+) is bound by residues cysteine 104, cysteine 107, cysteine 117, and cysteine 120.

This sequence belongs to the bacterial ribosomal protein bL32 family. As to quaternary structure, component of the mitochondrial large ribosomal subunit (mt-LSU). Mature yeast 74S mitochondrial ribosomes consist of a small (37S) and a large (54S) subunit. The 37S small subunit contains a 15S ribosomal RNA (15S mt-rRNA) and 34 different proteins. The 54S large subunit contains a 21S rRNA (21S mt-rRNA) and 46 different proteins. bL32m has a zinc binding site. In terms of processing, MRPL32 precursor is processed by the m-AAA protease (composed of YTA12/RCA1 and YTA10/AFG3), which cleaves the N-terminal transit peptide. Cleavage by the m-AAA protease takes place prior to assembly into the large subunit, an essential step for mitochondrial ribosome (mitoribosome) assembly. Proper processing by the m-AAA protease is dependent on the zinc-binding region within the tightly folded C-terminal domain of MRPL32: zinc-dependent folding halts degradation initiated from the N-terminus and triggers the release of mature MRPL32.

It localises to the mitochondrion. Functionally, component of the mitochondrial ribosome (mitoribosome), a dedicated translation machinery responsible for the synthesis of mitochondrial genome-encoded proteins, including at least some of the essential transmembrane subunits of the mitochondrial respiratory chain. The mitoribosomes are attached to the mitochondrial inner membrane and translation products are cotranslationally integrated into the membrane. The sequence is that of Large ribosomal subunit protein bL32m from Saccharomyces cerevisiae (strain ATCC 204508 / S288c) (Baker's yeast).